A 339-amino-acid polypeptide reads, in one-letter code: Glycerol-3-phosphate dehydrogenase [NAD(P)+] (339 aa).

Ser-13, Trp-14, and Lys-108 together coordinate NADPH. Sn-glycerol 3-phosphate-binding residues include Lys-108, Gly-139, and Ser-141. Residue Ala-143 participates in NADPH binding. 5 residues coordinate sn-glycerol 3-phosphate: Lys-194, Asp-247, Ser-257, Arg-258, and Asn-259. Lys-194 acts as the Proton acceptor in catalysis. Arg-258 is a binding site for NADPH. Val-282 and Glu-284 together coordinate NADPH.

Belongs to the NAD-dependent glycerol-3-phosphate dehydrogenase family.

It is found in the cytoplasm. It catalyses the reaction sn-glycerol 3-phosphate + NAD(+) = dihydroxyacetone phosphate + NADH + H(+). It carries out the reaction sn-glycerol 3-phosphate + NADP(+) = dihydroxyacetone phosphate + NADPH + H(+). The protein operates within membrane lipid metabolism; glycerophospholipid metabolism. Functionally, catalyzes the reduction of the glycolytic intermediate dihydroxyacetone phosphate (DHAP) to sn-glycerol 3-phosphate (G3P), the key precursor for phospholipid synthesis. The chain is Glycerol-3-phosphate dehydrogenase [NAD(P)+] from Streptococcus equi subsp. zooepidemicus (strain H70).